The following is a 194-amino-acid chain: Probable calcium-binding protein CML45 (194 aa).

The span at 52 to 63 shows a compositional bias: basic and acidic residues; it reads NNKDQQETLTKQ. The tract at residues 52-81 is disordered; sequence NNKDQQETLTKQEDDDDDDDDDDDDDDDDI. Residues 64–81 are compositionally biased toward acidic residues; the sequence is EDDDDDDDDDDDDDDDDI. EF-hand domains lie at 76-98, 122-157, and 160-194; these read DDDDDIDISREEAEMVMRSLGLF, ASLEEVKQAFDVFDENKDGFIDAIELQRVLTILGFK, and SYLDNCLVMIRSLDGNKDGKIDFNEFVKFMETSFY. Residues Asp-135, Asn-137, Asp-139, Glu-146, Asp-173, Asn-175, Asp-177, Lys-179, and Glu-184 each coordinate Ca(2+).

Functionally, potential calcium sensor. This is Probable calcium-binding protein CML45 from Arabidopsis thaliana (Mouse-ear cress).